The following is a 192-amino-acid chain: uncharacterized protein (192 aa).

Positions 17 to 73 (MLRGSGKKPIQRLAKAPAATASSKTSEWRATTAYGFLPAGGDVRPHSPRYESQGVLS) are disordered. Over residues 30–41 (AKAPAATASSKT) the composition is skewed to low complexity.

This is an uncharacterized protein from Sinorhizobium fredii (strain NBRC 101917 / NGR234).